Here is a 507-residue protein sequence, read N- to C-terminus: Hexokinase-5 (507 aa).

A helical transmembrane segment spans residues 4 to 24 (AAAVGTAVVVAAAVGVAVVLA). Residues 44-498 (RKVAAVIEDV…SGIGAALLAA (455 aa)) form the Hexokinase domain. The segment at 99-237 (TGNEQGLFYA…GLDMKIAALV (139 aa)) is hexokinase small subdomain. Gly113, Thr114, and Asn115 together coordinate ADP. Thr203, Lys204, Asn238, and Asp239 together coordinate D-glucose. Positions 238–487 (NDTVGTLAGG…SSVVTKLAND (250 aa)) are hexokinase large subdomain. Thr262 lines the ADP pocket. Asn265, Glu293, and Glu324 together coordinate D-glucose. Residue Gly452 coordinates ADP.

This sequence belongs to the hexokinase family. Expressed in roots, leaves, flowers, immature seeds, endosperm and seed coat.

The protein resides in the plastid. It is found in the chloroplast outer membrane. The catalysed reaction is a D-hexose + ATP = a D-hexose 6-phosphate + ADP + H(+). It carries out the reaction D-fructose + ATP = D-fructose 6-phosphate + ADP + H(+). The enzyme catalyses D-glucose + ATP = D-glucose 6-phosphate + ADP + H(+). It functions in the pathway carbohydrate metabolism; hexose metabolism. The protein operates within carbohydrate degradation; glycolysis; D-glyceraldehyde 3-phosphate and glycerone phosphate from D-glucose: step 1/4. Functionally, fructose and glucose phosphorylating enzyme. Functions as a glucose sensor for plant growth and photosynthesis. Is essential for pollen development, germination, and tube growth. Its activity is necessary for the starch utilization pathway during pollen germination and tube growth, as well as for starch biosynthesis during pollen maturation. The sequence is that of Hexokinase-5 (HXK5) from Oryza sativa subsp. japonica (Rice).